The chain runs to 200 residues: TATA-box-binding protein 2 (200 aa).

2 tandem repeats follow at residues 25 to 101 (LQNI…ARII) and 115 to 192 (IQNI…YPVL).

This sequence belongs to the TBP family. In terms of assembly, belongs to the TFIID complex together with the TBP-associated factors (TAFs). Binds DNA as monomer.

The protein localises to the nucleus. In terms of biological role, general transcription factor that functions at the core of the DNA-binding multiprotein factor TFIID. Binding of TFIID to the TATA box is the initial transcriptional step of the pre-initiation complex (PIC), playing a role in the activation of eukaryotic genes transcribed by RNA polymerase II. This Zea mays (Maize) protein is TATA-box-binding protein 2 (TBP2).